The primary structure comprises 112 residues: Putative pterin-4-alpha-carbinolamine dehydratase (112 aa).

The protein belongs to the pterin-4-alpha-carbinolamine dehydratase family.

It catalyses the reaction (4aS,6R)-4a-hydroxy-L-erythro-5,6,7,8-tetrahydrobiopterin = (6R)-L-erythro-6,7-dihydrobiopterin + H2O. This chain is Putative pterin-4-alpha-carbinolamine dehydratase, found in Shewanella denitrificans (strain OS217 / ATCC BAA-1090 / DSM 15013).